We begin with the raw amino-acid sequence, 206 residues long: Ras-related protein RABG3f (206 aa).

15–23 contacts GTP; the sequence is GDSGVGKTS. Residues 37–45 carry the Effector region motif; sequence YKATIGADF. GTP is bound by residues 63–67, 125–128, and 158–159; these read DTAGQ, NKVD, and SA. S-geranylgeranyl cysteine attachment occurs at residues cysteine 204 and cysteine 206. Cysteine 206 bears the Cysteine methyl ester mark.

Belongs to the small GTPase superfamily. Rab family. Interacts with VPS35A.

It is found in the endosome membrane. The protein resides in the vacuole membrane. It localises to the prevacuolar compartment membrane. With respect to regulation, regulated by guanine nucleotide exchange factors (GEFs) which promote the exchange of bound GDP for free GTP. Regulated by the MON1-CCZ1 complex which serves as a link between Rab5 and Rab7 protein families in PVCs and mediates PVC maturation. In terms of biological role, essential for trafficking from prevacuolar compartments to vacuoles. Involved in the trafficking of newly synthesized protein to vacuoles. Essential for plant growth. Participates in the recruitment of the core retromer components to the endosomal membrane by interacting with VPS35A. The chain is Ras-related protein RABG3f (RABG3F) from Arabidopsis thaliana (Mouse-ear cress).